Reading from the N-terminus, the 88-residue chain is Prolevitide (88 aa).

The N-terminal stretch at 1–20 is a signal peptide; it reads MYKGIFLCVLFAVICANSLA. At Gln74 the chain carries Pyrrolidone carboxylic acid. Position 87 is a glutamine amide (Gln87).

It belongs to the gastrin/cholecystokinin family. In terms of tissue distribution, expressed by the skin glands.

It localises to the secreted. In Xenopus laevis (African clawed frog), this protein is Prolevitide.